The chain runs to 130 residues: MMKRAAAAAVGGALAVGAVPVVLSAMGFTGAGIAASSIAAKMMSAAAIANGGGVSAGSLVATLQSVGAAGLSTSSNILLASVGSVLGACLGNSPSSSLPAEPEAKEDEARENVPQGEPPKPPLKSEKHEE.

Transmembrane regions (helical) follow at residues 8-28, 43-63, and 66-86; these read AAVG…AMGF, MSAA…VATL, and VGAA…GSVL. The segment at 93–130 is disordered; sequence SPSSSLPAEPEAKEDEARENVPQGEPPKPPLKSEKHEE.

It belongs to the IFI6/IFI27 family.

It localises to the mitochondrion membrane. Plays a role in the apoptotic process and has a pro-apoptotic activity. This Homo sapiens (Human) protein is Interferon alpha-inducible protein 27-like protein 2.